The chain runs to 114 residues: Nucleoid-associated protein MAB_0319 (114 aa).

The protein belongs to the YbaB/EbfC family. As to quaternary structure, homodimer.

Its subcellular location is the cytoplasm. The protein localises to the nucleoid. Binds to DNA and alters its conformation. May be involved in regulation of gene expression, nucleoid organization and DNA protection. The chain is Nucleoid-associated protein MAB_0319 from Mycobacteroides abscessus (strain ATCC 19977 / DSM 44196 / CCUG 20993 / CIP 104536 / JCM 13569 / NCTC 13031 / TMC 1543 / L948) (Mycobacterium abscessus).